Consider the following 640-residue polypeptide: Preterminal protein (640 aa).

Residues 232–257 (PSQEGEGEERENPDRASSRPRPQETV) form a disordered region. Positions 351–360 (RLPVRRRRRR) match the Nuclear localization signal motif. Residue serine 549 is modified to O-(5'-phospho-DNA)-serine. The interval 614–640 (GADVPLPAMPPGPEPPLPPGARPRHRF) is disordered. A compositionally biased stretch (pro residues) spans 620-634 (PAMPPGPEPPLPPGA).

Belongs to the adenoviridae terminal protein family. In terms of assembly, heterodimer with the polymerase; this heterodimer binds to bp 9 to 18 of the genome. Interacts with host POU2F1; POU2F1 binds to the auxiliary sequences in the inverted terminal repeats and tethers the pTP-POL heterodimer to the origin DNA thereby participating in the assembly of the pre-initiation complex (POL-TP-DBP-NFIA-POU2F1). In terms of processing, preterminal protein is used to replicate viral genome, upon genomic encapsidation it is processed first into iTP and finally into TP by adenovirus protease.

The protein resides in the host nucleus matrix. Functionally, protein covalently bound to the viral DNA that acts as a primer for viral genomic replication by DNA strand displacement. Assembles on the viral origin of replication in an initiation complex with viral polymerase, DBP, host NFIA and host POU2F1/OCT1. During initiation, the polymerase covalently couples the first dCTP with Ser-580 of pTP. The terminal protein stimulates the template activity over 20 fold compared to protein-free templates. Neo-synthesized viral genomes are linked to two preterminal proteins, one for each 5' end. These new genomes are encapsidated in the nucleus, and during capsid maturation by viral protease, preterminal protein is first cleaved into intermediary (iTP), then into mature TP. May play a role in host nuclear matrix localization of genomic DNA. The polypeptide is Preterminal protein (Human adenovirus B serotype 7 (HAdV-7)).